Reading from the N-terminus, the 362-residue chain is 3-dehydroquinate synthase (362 aa).

NAD(+)-binding positions include D70–K75, G104–D108, T128–T129, K141, K150, and T168–T171. Positions 183, 246, and 263 each coordinate Zn(2+).

The protein belongs to the sugar phosphate cyclases superfamily. Dehydroquinate synthase family. It depends on Co(2+) as a cofactor. Requires Zn(2+) as cofactor. NAD(+) serves as cofactor.

It localises to the cytoplasm. The enzyme catalyses 7-phospho-2-dehydro-3-deoxy-D-arabino-heptonate = 3-dehydroquinate + phosphate. Its pathway is metabolic intermediate biosynthesis; chorismate biosynthesis; chorismate from D-erythrose 4-phosphate and phosphoenolpyruvate: step 2/7. Functionally, catalyzes the conversion of 3-deoxy-D-arabino-heptulosonate 7-phosphate (DAHP) to dehydroquinate (DHQ). The sequence is that of 3-dehydroquinate synthase from Haemophilus influenzae (strain 86-028NP).